Here is a 367-residue protein sequence, read N- to C-terminus: tRNA-specific 2-thiouridylase MnmA (367 aa).

Residues 12–19 (GMSGGVDS) and Met38 contribute to the ATP site. An interaction with target base in tRNA region spans residues 98 to 100 (NPD). Cys103 acts as the Nucleophile in catalysis. Cys103 and Cys200 form a disulfide bridge. Residue Gly128 participates in ATP binding. An interaction with tRNA region spans residues 150 to 152 (KDQ). Cys200 functions as the Cysteine persulfide intermediate in the catalytic mechanism. Residues 312-313 (RY) form an interaction with tRNA region.

It belongs to the MnmA/TRMU family. In terms of assembly, interacts with TusE.

The protein localises to the cytoplasm. It carries out the reaction S-sulfanyl-L-cysteinyl-[protein] + uridine(34) in tRNA + AH2 + ATP = 2-thiouridine(34) in tRNA + L-cysteinyl-[protein] + A + AMP + diphosphate + H(+). Functionally, catalyzes the 2-thiolation of uridine at the wobble position (U34) of tRNA(Lys), tRNA(Glu) and tRNA(Gln), leading to the formation of s(2)U34, the first step of tRNA-mnm(5)s(2)U34 synthesis. Sulfur is provided by IscS, via a sulfur-relay system. Binds ATP and its substrate tRNAs. In Proteus mirabilis (strain HI4320), this protein is tRNA-specific 2-thiouridylase MnmA.